The chain runs to 427 residues: Peptidase B (427 aa).

Mn(2+) is bound by residues K195 and D200. K207 is an active-site residue. Mn(2+)-binding residues include D218, D277, and E279. The active site involves R281.

It belongs to the peptidase M17 family. In terms of assembly, homohexamer. Mn(2+) serves as cofactor.

It is found in the cytoplasm. It carries out the reaction Release of an N-terminal amino acid, Xaa, from a peptide or arylamide. Xaa is preferably Glu or Asp but may be other amino acids, including Leu, Met, His, Cys and Gln.. Functionally, probably plays an important role in intracellular peptide degradation. The protein is Peptidase B of Escherichia coli (strain ATCC 8739 / DSM 1576 / NBRC 3972 / NCIMB 8545 / WDCM 00012 / Crooks).